Here is a 317-residue protein sequence, read N- to C-terminus: Transaldolase (317 aa).

Lysine 126 (schiff-base intermediate with substrate) is an active-site residue.

This sequence belongs to the transaldolase family. Type 1 subfamily. As to quaternary structure, homodimer.

The protein localises to the cytoplasm. It catalyses the reaction D-sedoheptulose 7-phosphate + D-glyceraldehyde 3-phosphate = D-erythrose 4-phosphate + beta-D-fructose 6-phosphate. It functions in the pathway carbohydrate degradation; pentose phosphate pathway; D-glyceraldehyde 3-phosphate and beta-D-fructose 6-phosphate from D-ribose 5-phosphate and D-xylulose 5-phosphate (non-oxidative stage): step 2/3. Its function is as follows. Transaldolase is important for the balance of metabolites in the pentose-phosphate pathway. The polypeptide is Transaldolase (Burkholderia lata (strain ATCC 17760 / DSM 23089 / LMG 22485 / NCIMB 9086 / R18194 / 383)).